The following is a 311-amino-acid chain: Ribosomal RNA small subunit methyltransferase H (311 aa).

S-adenosyl-L-methionine is bound by residues 33–35 (AGH), Asp53, Phe80, Asp101, and Gln108.

It belongs to the methyltransferase superfamily. RsmH family.

It localises to the cytoplasm. It catalyses the reaction cytidine(1402) in 16S rRNA + S-adenosyl-L-methionine = N(4)-methylcytidine(1402) in 16S rRNA + S-adenosyl-L-homocysteine + H(+). Specifically methylates the N4 position of cytidine in position 1402 (C1402) of 16S rRNA. The sequence is that of Ribosomal RNA small subunit methyltransferase H from Geobacter sulfurreducens (strain ATCC 51573 / DSM 12127 / PCA).